We begin with the raw amino-acid sequence, 921 residues long: Protein translocase subunit SecA (921 aa).

Residues glutamine 86, 104–108 (GEGKT), and aspartate 497 contribute to the ATP site. Residues 829 to 838 (QQAPQQQPQQ) show a composition bias toward low complexity. The segment at 829–921 (QQAPQQQPQQ…CHGAIETQKA (93 aa)) is disordered. Residues 839–855 (VAPPPRPQPPQPAPQPP) show a composition bias toward pro residues. Zn(2+) is bound by residues cysteine 901, cysteine 903, cysteine 912, and histidine 913.

The protein belongs to the SecA family. As to quaternary structure, monomer and homodimer. Part of the essential Sec protein translocation apparatus which comprises SecA, SecYEG and auxiliary proteins SecDF-YajC and YidC. Zn(2+) is required as a cofactor.

The protein resides in the cell inner membrane. It is found in the cytoplasm. It carries out the reaction ATP + H2O + cellular proteinSide 1 = ADP + phosphate + cellular proteinSide 2.. Functionally, part of the Sec protein translocase complex. Interacts with the SecYEG preprotein conducting channel. Has a central role in coupling the hydrolysis of ATP to the transfer of proteins into and across the cell membrane, serving both as a receptor for the preprotein-SecB complex and as an ATP-driven molecular motor driving the stepwise translocation of polypeptide chains across the membrane. In Hyphomonas neptunium (strain ATCC 15444), this protein is Protein translocase subunit SecA.